The following is a 136-amino-acid chain: DNA-directed RNA polymerase subunit omega (136 aa).

A disordered region spans residues 81 to 136; that stretch reads EAEAVPLLSSSPAAAAVAPQSSGDDGDIQFDRMSEEDLLRGLENLAPPTETEDEGD. Residues 83 to 99 are compositionally biased toward low complexity; it reads EAVPLLSSSPAAAAVAP. Residues 109–120 show a composition bias toward basic and acidic residues; the sequence is QFDRMSEEDLLR.

The protein belongs to the RNA polymerase subunit omega family. The RNAP catalytic core consists of 2 alpha, 1 beta, 1 beta' and 1 omega subunit. When a sigma factor is associated with the core the holoenzyme is formed, which can initiate transcription.

It catalyses the reaction RNA(n) + a ribonucleoside 5'-triphosphate = RNA(n+1) + diphosphate. In terms of biological role, promotes RNA polymerase assembly. Latches the N- and C-terminal regions of the beta' subunit thereby facilitating its interaction with the beta and alpha subunits. The sequence is that of DNA-directed RNA polymerase subunit omega from Methylobacterium nodulans (strain LMG 21967 / CNCM I-2342 / ORS 2060).